Here is a 311-residue protein sequence, read N- to C-terminus: Aspartate carbamoyltransferase catalytic subunit (311 aa).

R55 and T56 together coordinate carbamoyl phosphate. K85 serves as a coordination point for L-aspartate. The carbamoyl phosphate site is built by R106, H135, and Q138. Residues R168 and R230 each coordinate L-aspartate. Positions 268 and 269 each coordinate carbamoyl phosphate.

It belongs to the aspartate/ornithine carbamoyltransferase superfamily. ATCase family. In terms of assembly, heterododecamer (2C3:3R2) of six catalytic PyrB chains organized as two trimers (C3), and six regulatory PyrI chains organized as three dimers (R2).

The catalysed reaction is carbamoyl phosphate + L-aspartate = N-carbamoyl-L-aspartate + phosphate + H(+). It participates in pyrimidine metabolism; UMP biosynthesis via de novo pathway; (S)-dihydroorotate from bicarbonate: step 2/3. Its function is as follows. Catalyzes the condensation of carbamoyl phosphate and aspartate to form carbamoyl aspartate and inorganic phosphate, the committed step in the de novo pyrimidine nucleotide biosynthesis pathway. This is Aspartate carbamoyltransferase catalytic subunit from Escherichia coli (strain 55989 / EAEC).